A 371-amino-acid chain; its full sequence is Alginate lyase (371 aa).

The signal sequence occupies residues 1–26 (MQSTDLKRLLIPSLLGLAIVTGSAQA). Substrate is bound by residues 67–68 (SK), 140–141 (HT), and tyrosine 258.

It belongs to the polysaccharide lyase 5 family.

The protein localises to the periplasm. The catalysed reaction is Eliminative cleavage of alginate to give oligosaccharides with 4-deoxy-alpha-L-erythro-hex-4-enuronosyl groups at their non-reducing ends and beta-D-mannuronate at their reducing end.. In terms of biological role, catalyzes the depolymerization of alginate by cleaving the beta-1,4 glycosidic bond between two adjacent sugar residues via a beta-elimination mechanism. May serve to degrade mislocalized alginate that is trapped in the periplasmic space. In Pseudomonas fluorescens (strain ATCC BAA-477 / NRRL B-23932 / Pf-5), this protein is Alginate lyase.